The chain runs to 96 residues: UPF0166 protein aq_448 (96 aa).

Belongs to the UPF0166 family.

In Aquifex aeolicus (strain VF5), this protein is UPF0166 protein aq_448.